A 125-amino-acid chain; its full sequence is Holo-[acyl-carrier-protein] synthase (125 aa).

Mg(2+) contacts are provided by Asp-8 and Glu-60.

Belongs to the P-Pant transferase superfamily. AcpS family. Requires Mg(2+) as cofactor.

It is found in the cytoplasm. The enzyme catalyses apo-[ACP] + CoA = holo-[ACP] + adenosine 3',5'-bisphosphate + H(+). Its function is as follows. Transfers the 4'-phosphopantetheine moiety from coenzyme A to a Ser of acyl-carrier-protein. In Wolbachia sp. subsp. Brugia malayi (strain TRS), this protein is Holo-[acyl-carrier-protein] synthase.